The sequence spans 588 residues: Probable urocanate hydratase (588 aa).

Positions 1–15 are enriched in low complexity; it reads MDTPSAAAETSEPSA. Residues 1-22 are disordered; sequence MDTPSAAAETSEPSAQWQAYRG. NAD(+)-binding positions include 62–63, Gln-140, 188–190, Glu-208, Arg-213, 254–255, 275–279, and Tyr-334; these read GG, GMG, NA, and QTSAH. The active site involves Cys-431. Gly-520 lines the NAD(+) pocket.

This sequence belongs to the urocanase family. It depends on NAD(+) as a cofactor.

It is found in the cytoplasm. It catalyses the reaction 4-imidazolone-5-propanoate = trans-urocanate + H2O. It functions in the pathway amino-acid degradation; L-histidine degradation into L-glutamate; N-formimidoyl-L-glutamate from L-histidine: step 2/3. Its function is as follows. Catalyzes the conversion of urocanate to 4-imidazolone-5-propionate. This is Probable urocanate hydratase from Halobacterium salinarum (strain ATCC 29341 / DSM 671 / R1).